The following is a 94-amino-acid chain: Putative defensin-like protein 88 (94 aa).

Positions Met-1–Ser-26 are cleaved as a signal peptide. 3 disulfides stabilise this stretch: Cys-32/Cys-72, Cys-38/Cys-59, and Cys-48/Cys-71.

This sequence belongs to the DEFL family.

It is found in the secreted. This chain is Putative defensin-like protein 88, found in Arabidopsis thaliana (Mouse-ear cress).